Reading from the N-terminus, the 392-residue chain is Carbamoyl phosphate synthase small chain (392 aa).

The tract at residues 1-174 is CPSase; sequence MSKKALLALE…EVIVENPEGD (174 aa). The L-glutamine site is built by Ser47, Gly224, and Gly226. Residues 176 to 392 form the Glutamine amidotransferase type-1 domain; it reads SVVVLDSGVK…EFKRLIKEVR (217 aa). Cys252 functions as the Nucleophile in the catalytic mechanism. Leu253, Gln256, Asn294, Gly296, and Phe297 together coordinate L-glutamine. Residues His367 and Glu369 contribute to the active site.

This sequence belongs to the CarA family. As to quaternary structure, composed of two chains; the small (or glutamine) chain promotes the hydrolysis of glutamine to ammonia, which is used by the large (or ammonia) chain to synthesize carbamoyl phosphate. Tetramer of heterodimers (alpha,beta)4.

The catalysed reaction is hydrogencarbonate + L-glutamine + 2 ATP + H2O = carbamoyl phosphate + L-glutamate + 2 ADP + phosphate + 2 H(+). It carries out the reaction L-glutamine + H2O = L-glutamate + NH4(+). It participates in amino-acid biosynthesis; L-arginine biosynthesis; carbamoyl phosphate from bicarbonate: step 1/1. Its pathway is pyrimidine metabolism; UMP biosynthesis via de novo pathway; (S)-dihydroorotate from bicarbonate: step 1/3. Small subunit of the glutamine-dependent carbamoyl phosphate synthetase (CPSase). CPSase catalyzes the formation of carbamoyl phosphate from the ammonia moiety of glutamine, carbonate, and phosphate donated by ATP, constituting the first step of 2 biosynthetic pathways, one leading to arginine and/or urea and the other to pyrimidine nucleotides. The small subunit (glutamine amidotransferase) binds and cleaves glutamine to supply the large subunit with the substrate ammonia. The chain is Carbamoyl phosphate synthase small chain from Thermotoga maritima (strain ATCC 43589 / DSM 3109 / JCM 10099 / NBRC 100826 / MSB8).